A 517-amino-acid polypeptide reads, in one-letter code: ATP synthase subunit alpha (517 aa).

174–181 (GDRQTGKT) contributes to the ATP binding site.

This sequence belongs to the ATPase alpha/beta chains family. In terms of assembly, F-type ATPases have 2 components, CF(1) - the catalytic core - and CF(0) - the membrane proton channel. CF(1) has five subunits: alpha(3), beta(3), gamma(1), delta(1), epsilon(1). CF(0) has three main subunits: a(1), b(2) and c(9-12). The alpha and beta chains form an alternating ring which encloses part of the gamma chain. CF(1) is attached to CF(0) by a central stalk formed by the gamma and epsilon chains, while a peripheral stalk is formed by the delta and b chains.

It localises to the cell inner membrane. It catalyses the reaction ATP + H2O + 4 H(+)(in) = ADP + phosphate + 5 H(+)(out). Produces ATP from ADP in the presence of a proton gradient across the membrane. The alpha chain is a regulatory subunit. The protein is ATP synthase subunit alpha of Variovorax paradoxus (strain S110).